Reading from the N-terminus, the 168-residue chain is Phosphopantetheine adenylyltransferase (168 aa).

Thr-13 is a binding site for substrate. ATP contacts are provided by residues 13–14 (TF) and His-21. Substrate contacts are provided by Lys-45, Leu-78, and Arg-92. ATP-binding positions include 93 to 95 (GLR), Glu-103, and 128 to 134 (TQFISSS).

The protein belongs to the bacterial CoaD family. Homohexamer. Mg(2+) is required as a cofactor.

It is found in the cytoplasm. It carries out the reaction (R)-4'-phosphopantetheine + ATP + H(+) = 3'-dephospho-CoA + diphosphate. The protein operates within cofactor biosynthesis; coenzyme A biosynthesis; CoA from (R)-pantothenate: step 4/5. Its function is as follows. Reversibly transfers an adenylyl group from ATP to 4'-phosphopantetheine, yielding dephospho-CoA (dPCoA) and pyrophosphate. This chain is Phosphopantetheine adenylyltransferase, found in Wolbachia pipientis subsp. Culex pipiens (strain wPip).